The chain runs to 112 residues: Cytochrome c (112 aa).

3 residues coordinate heme c: Cys23, Cys26, and His27. Residue Lys81 is modified to N6,N6,N6-trimethyllysine. Met89 contributes to the heme c binding site. N6,N6,N6-trimethyllysine is present on Lys95.

This sequence belongs to the cytochrome c family. Post-translationally, binds 1 heme c group covalently per subunit.

Its subcellular location is the mitochondrion intermembrane space. In terms of biological role, electron carrier protein. The oxidized form of the cytochrome c heme group can accept an electron from the heme group of the cytochrome c1 subunit of cytochrome reductase. Cytochrome c then transfers this electron to the cytochrome oxidase complex, the final protein carrier in the mitochondrial electron-transport chain. The chain is Cytochrome c (CC-1) from Arabidopsis thaliana (Mouse-ear cress).